A 302-amino-acid chain; its full sequence is Protein KTI12 homolog (302 aa).

ATP is bound at residue 8–15 (GQPCSGKS). Positions 260–273 (LRRTFVKLMGQSSL) are calmodulin-binding.

Belongs to the KTI12 family. As to quaternary structure, interacts with the elongator complex. Binds to calmodulin in a calcium-dependent manner. Expressed in roots, hypocotyls, cotyledons, shoot apices, stems, inflorescence apices, leaves and flowers.

It is found in the cytoplasm. It localises to the nucleus. Elongator complex-associated factor that is not a structural subunit but rather transiently contacts the complex. Regulates both meristem activity and organ growth; acts as a positive regulator of adaxial leaf patterning by modulating both cell division and differentiation. Required for an early step in synthesis of 5-carbamoylmethyl (ncm5) groups present on uridines (ncm5U) at the wobble position in tRNA. The chain is Protein KTI12 homolog from Arabidopsis thaliana (Mouse-ear cress).